The chain runs to 1461 residues: Periaxin (1461 aa).

Residue Ser-7 is modified to Phosphoserine. The region spanning 16–99 (LVEIIVETEA…YKVSFCLKRT (84 aa)) is the PDZ domain. Residues 70-84 (VFFENFKYEDALRLL) carry the Nuclear export signal motif. Residues 118 to 196 (KGPRAKVAKL…RLQLPRLRVR (79 aa)) carry the Nuclear localization signal motif. Ser-133 carries the phosphoserine modification. 55 consecutive repeat copies span residues 431–435 (GPEVK), 439–443 (GPEVK), 447–451 (APEVK), 455–459 (VPEAA), 463–467 (VRLPE), 468–472 (VELPK), 473–477 (VSEMK), 481–485 (VPEMA), 486–490 (VPEVR), 494–498 (VELPK), 499–503 (VSEMK), 507–511 (VPEMA), 512–516 (VPEVR), 520–524 (VQLLK), 525–529 (VSEMK), 533–537 (VPEMA), 538–542 (VPEVR), 546–550 (VQLPK), 551–555 (VSEMK), 559–563 (VSEVA), 564–568 (VPEVR), 572–576 (VQLPK), 577–581 (VPEMK), 582–586 (VPEMK), 590–594 (VPEMK), 595–599 (LPEMK), 600–604 (LPEVQ), 608–612 (VPEMA), 613–617 (VPDVH), 618–622 (LPEVQ), 626–630 (VPEMK), 631–635 (LPEMK), 636–640 (LPEVK), 644–648 (VPEMA), 649–653 (VPDVH), 654–658 (LPEVQ), 662–666 (VPEMK), 670–674 (MPEMA), 675–679 (VPEVR), 683–687 (VQLPK), 688–692 (VSEMK), 696–700 (VPEMA), 701–705 (VPDVH), 706–710 (LPEVQ), 714–718 (VCEMK), 719–723 (VPDMK), 724–728 (LPEIK), 732–736 (VPEMA), 737–741 (VPDVH), 742–746 (LPEVQ), 750–754 (VSEIR), 755–759 (LPEMQ), 760–764 (VPKVP), 771–775 (APEVK), and 779–783 (APEVQ). Positions 431-783 (GPEVKVPKGP…VKLPRAPEVQ (353 aa)) are 55 X 5 AA approximate tandem repeats of [LVMAG]-[PSREQC]-[EDKL]-[LIVMAP]-[AQKHRPE]; that may have a tripeptide spacer of [LV]-P-[KER]. 2 positions are modified to phosphoserine: Ser-900 and Ser-1082. The span at 1318–1327 (EGAEEGEKAK) shows a compositional bias: basic and acidic residues. The disordered stretch occupies residues 1318-1461 (EGAEEGEKAK…RMEGAQAAAV (144 aa)). A phosphoserine mark is found at Ser-1349, Ser-1351, Ser-1363, Ser-1401, Ser-1407, and Ser-1439. Positions 1352 to 1363 (PEEEEEEEEEGS) are enriched in acidic residues.

The protein belongs to the periaxin family. As to quaternary structure, homodimer (via PDZ domain). Interacts with SCN10A. Found in a complex with SCN10A. Interacts with DRP2. Identified in a dystroglycan complex that contains at least PRX, DRP2, UTRN, DMD and DAG1. Detected in a complex composed of at least EZR, AHNAK, PPL and PRX. Identified in a complex with EZR, AHNAK, BFSP1, BFSP2, ANK2, PLEC, VIM and spectrin. As to expression, detected in spinal cord. Isoform 1 and isoform 2 are found in sciatic nerve and Schwann cells.

It localises to the cell membrane. The protein resides in the nucleus. Its subcellular location is the cytoplasm. It is found in the cell junction. Functionally, scaffolding protein that functions as part of a dystroglycan complex in Schwann cells, and as part of EZR and AHNAK-containing complexes in eye lens fiber cells. Required for the maintenance of the peripheral myelin sheath that is essential for normal transmission of nerve impulses and normal perception of sensory stimuli. Required for normal transport of MBP mRNA from the perinuclear to the paranodal regions. Required for normal remyelination after nerve injury. Required for normal elongation of Schwann cells and normal length of the internodes between the nodes of Ranvier. The demyelinated nodes of Ranvier permit saltatory transmission of nerve impulses; shorter internodes cause slower transmission of nerve impulses. Required for the formation of appositions between the abaxonal surface of the myelin sheath and the Schwann cell plasma membrane; the Schwann cell cytoplasm is restricted to regions between these appositions. Required for the formation of Cajal bands and of Schmidt-Lanterman incisures that correspond to short, cytoplasm-filled regions on myelinated nerves. Recruits DRP2 to the Schwann cell plasma membrane. Required for normal protein composition of the eye lens fiber cell plasma membrane and normal eye lens fiber cell morphology. The chain is Periaxin (PRX) from Homo sapiens (Human).